A 9159-amino-acid polypeptide reads, in one-letter code: Halomucin (9159 aa).

An N-terminal signal peptide occupies residues 1–30; sequence MSQTAKPIFAVVVALIVLISGVAFIGSVSA. C-type lectin domains follow at residues 644-776 and 929-1060; these read TTGN…YLVE and YDGH…VEYG. Over residues 1310-1332 the composition is skewed to polar residues; it reads QPQTVNDPDAVSTRNNNVGSNGL. A disordered region spans residues 1310 to 1351; sequence QPQTVNDPDAVSTRNNNVGSNGLDSKIEDDQNNGADGNPHGT. Residues 1756-3380 are V-G-G-L motif-rich region; it reads VGGLIGESSG…GFNGEHVGGL (1625 aa). 8 disordered regions span residues 3484–3514, 4878–4912, 6570–6589, 7047–7097, 7660–7702, 7888–7923, 8212–8237, and 8369–8614; these read GATAQSDATGSGTPGGATGYGSVGDTTPAPQ, ESYWDKGATDKSDATGSDTPATVSGYGSVGDTTPA, TDSATGSSVGGLIGSQSSGQ, TPTV…GINT, ATDS…NPGG, IDGDGLADDNEATGVPTDNDDDNDGIPDDEDQEPAL, STQQKRVGPLVSEDPSTVSWPSGAAD, and DSTA…GSST. The segment covering 3495 to 3505 has biased composition (gly residues); that stretch reads GTPGGATGYGS. The segment covering 4880–4890 has biased composition (basic and acidic residues); the sequence is YWDKGATDKSD. Composition is skewed to polar residues over residues 7048-7057 and 7068-7078; these read PTVTINSSSD and GEDSTSSNESS. A compositionally biased stretch (acidic residues) spans 7079 to 7092; that stretch reads DGTESDQGDPEDDI. Residues 7681-7698 are compositionally biased toward polar residues; sequence VTGSTPTFVSSGTVTTPE. The 108-residue stretch at 7686 to 7793 folds into the Cadherin domain; the sequence is PTFVSSGTVT…ITDVDEQPTG (108 aa). Composition is skewed to acidic residues over residues 7888 to 7898 and 7905 to 7920; these read IDGDGLADDNE and DNDDDNDGIPDDEDQE. A compositionally biased stretch (acidic residues) spans 8378–8390; that stretch reads ALEDDSSNQDSGD. Composition is skewed to low complexity over residues 8391–8529 and 8538–8548; these read DSSN…SSQN and SAAAVGAESGS. Composition is skewed to gly residues over residues 8549-8566 and 8574-8608; these read EMGGETGGESQAGGGDGS and AGGGSSGGSSSGDSGGSSSGNSGGSSSGNSGGSSS.

In terms of processing, probably glycosylated with sugar containing sialic acid. This may further contribute to its overall negative charge, thereby creating an aqueous shield covering the cells.

Its subcellular location is the secreted. Functionally, may protect the organism from desiccation stress. May also contribute to the rigidity and maintenance of the unique square cell morphology of H.walsbyi. The protein is Halomucin (hmu) of Haloquadratum walsbyi (strain DSM 16790 / HBSQ001).